The sequence spans 168 residues: ATP synthase subunit b (168 aa).

A helical membrane pass occupies residues 7–26 (FVLSNFIFTLINLWIMYWVL).

Belongs to the ATPase B chain family. As to quaternary structure, F-type ATPases have 2 components, F(1) - the catalytic core - and F(0) - the membrane proton channel. F(1) has five subunits: alpha(3), beta(3), gamma(1), delta(1), epsilon(1). F(0) has three main subunits: a(1), b(2) and c(10-14). The alpha and beta chains form an alternating ring which encloses part of the gamma chain. F(1) is attached to F(0) by a central stalk formed by the gamma and epsilon chains, while a peripheral stalk is formed by the delta and b chains.

It is found in the cell membrane. Functionally, f(1)F(0) ATP synthase produces ATP from ADP in the presence of a proton or sodium gradient. F-type ATPases consist of two structural domains, F(1) containing the extramembraneous catalytic core and F(0) containing the membrane proton channel, linked together by a central stalk and a peripheral stalk. During catalysis, ATP synthesis in the catalytic domain of F(1) is coupled via a rotary mechanism of the central stalk subunits to proton translocation. Component of the F(0) channel, it forms part of the peripheral stalk, linking F(1) to F(0). The protein is ATP synthase subunit b of Alkaliphilus metalliredigens (strain QYMF).